The sequence spans 48 residues: Small polypeptide DEVIL 14 (48 aa).

The helical transmembrane segment at 4–23 (TVVLRCCTSVTKVRTWKRCS) threads the bilayer. Residues 17–48 (RTWKRCSKQIKEQRARLYIIWKCAVFLLSSHD) are required for DVL/RTFL small polypeptide activity.

This sequence belongs to the DVL/RTFL small polypeptides family.

Its subcellular location is the cell membrane. Its function is as follows. Small polypeptide acting as a regulatory molecule which coordinates cellular responses required for differentiation, growth and development, probably by restricting polar cell proliferation in lateral organs and coordinating socket cell recruitment and differentiation at trichome sites. In Arabidopsis thaliana (Mouse-ear cress), this protein is Small polypeptide DEVIL 14.